Reading from the N-terminus, the 693-residue chain is Histone-lysine N-methyltransferase, H3 lysine-9 specific SUVH7 (693 aa).

Disordered stretches follow at residues 64–99 (WYDG…PPEM) and 111–175 (DSSN…AETE). The a.T hook DNA-binding region spans 129-141 (KRGRGRPKGSKNS). The YDG domain occupies 227 to 373 (GAVPGIHVGD…FKEFRFKLVR (147 aa)). One can recognise a Pre-SET domain in the interval 454-516 (QSLGCQNCRH…HCPTRLVQTG (63 aa)). Positions 458, 461, 466, 471, 473, 498, 502, 504, and 508 each coordinate Zn(2+). An SET domain is found at 519-660 (LHLEVFKTRN…PMTELTYDYG (142 aa)). S-adenosyl-L-methionine contacts are provided by residues 529 to 531 (CGW), aspartate 562, tyrosine 564, arginine 614, and 617 to 618 (NH). Zn(2+) contacts are provided by cysteine 620, cysteine 681, cysteine 683, and cysteine 688. Residues 677 to 693 (GKKTCLCGSVKCRGSFT) enclose the Post-SET domain.

Belongs to the class V-like SAM-binding methyltransferase superfamily. Histone-lysine methyltransferase family. Suvar3-9 subfamily.

It localises to the nucleus. Its subcellular location is the chromosome. The protein localises to the centromere. It catalyses the reaction N(6)-methyl-L-lysyl(9)-[histone H3] + S-adenosyl-L-methionine = N(6),N(6)-dimethyl-L-lysyl(9)-[histone H3] + S-adenosyl-L-homocysteine + H(+). The enzyme catalyses L-lysyl(9)-[histone H3] + S-adenosyl-L-methionine = N(6)-methyl-L-lysyl(9)-[histone H3] + S-adenosyl-L-homocysteine + H(+). Histone methyltransferase. Methylates 'Lys-9' of histone H3. H3 'Lys-9' methylation represents a specific tag for epigenetic transcriptional repression. In Arabidopsis thaliana (Mouse-ear cress), this protein is Histone-lysine N-methyltransferase, H3 lysine-9 specific SUVH7 (SUVH7).